We begin with the raw amino-acid sequence, 445 residues long: Probable histidine--tRNA ligase, cytoplasmic (445 aa).

This sequence belongs to the class-II aminoacyl-tRNA synthetase family.

The protein localises to the cytoplasm. The enzyme catalyses tRNA(His) + L-histidine + ATP = L-histidyl-tRNA(His) + AMP + diphosphate + H(+). The chain is Probable histidine--tRNA ligase, cytoplasmic from Antonospora locustae (Microsporidian parasite).